Reading from the N-terminus, the 669-residue chain is p135Gag-Myb-Ets-transforming protein (669 aa).

Residues 1 to 10 (NSTMRRKVEQ) are compositionally biased toward basic and acidic residues. Disordered stretches follow at residues 1–27 (NSTM…SATT) and 132–153 (TQNH…NTMT). Positions 90 to 142 (PAAAAIQRHYNDEDPEKEKRIKELELLLMSTENELKGQQALPTQNHTANYPGW) are transcriptional activation domain. The 86-residue stretch at 276 to 361 (ATFSGFAKEQ…EHLEILQKEE (86 aa)) folds into the PNT domain. Positions 556–640 (GSGPIQLWQF…AGKRYVYRFV (85 aa)) form a DNA-binding region, ETS.

It is found in the host nucleus. Functionally, DNA-binding protein that specifically recognizes the sequence 5'-YAAC[GT]G-3'. The Myb-Ets protein induces predominantly erythroblastosis in chicken and transforms avian erythroblasts and immature myelomonocytic cells in culture. It appears that the Ets domain is responsible for the effects on erythroid cells and that the Myb domain encodes the myeloid-transforming capacity. The polypeptide is p135Gag-Myb-Ets-transforming protein (GAG) (Avian leukemia virus E26).